The sequence spans 325 residues: Heat-inducible transcription repressor HrcA (325 aa).

The protein belongs to the HrcA family.

In terms of biological role, negative regulator of class I heat shock genes (grpE-dnaK-dnaJ and groELS operons). Prevents heat-shock induction of these operons. The polypeptide is Heat-inducible transcription repressor HrcA (Staphylococcus haemolyticus (strain JCSC1435)).